A 421-amino-acid polypeptide reads, in one-letter code: Ameloblastin (421 aa).

An N-terminal signal peptide occupies residues 1–26 (MPALKIPLFKMKDMVLILCLLKMSSA). Pro-37 bears the Hydroxyproline mark. Position 43 is a phosphoserine (Ser-43). 3 disordered regions span residues 104–126 (PVHP…QKPF), 264–311 (GGMP…ADPE), and 333–421 (GKIP…FQEP). A glycan (O-linked (GalNAc...) serine) is linked at Ser-112. A compositionally biased stretch (low complexity) spans 113–125 (QPSLQPQQPGQKP). Positions 339–350 (ARGPAGRSRGPP) are enriched in low complexity. Over residues 388–410 (MDSTATPYSEHTSMPGNKAQQPQ) the composition is skewed to polar residues. A compositionally biased stretch (basic and acidic residues) spans 411 to 421 (IKRDAWRFQEP).

It belongs to the ameloblastin family. As to expression, ameloblast-specific. Located at the Tomes processes of secretory ameloblasts and in the sheath space between rod-interrod enamel.

The protein resides in the secreted. The protein localises to the extracellular space. It is found in the extracellular matrix. Functionally, involved in the mineralization and structural organization of enamel. The sequence is that of Ameloblastin (AMBN) from Sus scrofa (Pig).